The chain runs to 362 residues: Holliday junction branch migration complex subunit RuvB (362 aa).

Residues 1–183 (MADSSLVGGG…FGFTGHLEFY (183 aa)) form a large ATPase domain (RuvB-L) region. ATP is bound by residues Leu22, Arg23, Gly64, Lys67, Thr68, Thr69, 130–132 (EDF), Arg173, Tyr183, and Arg220. Thr68 serves as a coordination point for Mg(2+). The interval 184–254 (SVEELELVLR…TASAALDMYE (71 aa)) is small ATPAse domain (RuvB-S). The tract at residues 257 to 362 (KRGLDRLDRS…PVAEWLPNGQ (106 aa)) is head domain (RuvB-H). Arg312 and Arg317 together coordinate DNA.

Belongs to the RuvB family. As to quaternary structure, homohexamer. Forms an RuvA(8)-RuvB(12)-Holliday junction (HJ) complex. HJ DNA is sandwiched between 2 RuvA tetramers; dsDNA enters through RuvA and exits via RuvB. An RuvB hexamer assembles on each DNA strand where it exits the tetramer. Each RuvB hexamer is contacted by two RuvA subunits (via domain III) on 2 adjacent RuvB subunits; this complex drives branch migration. In the full resolvosome a probable DNA-RuvA(4)-RuvB(12)-RuvC(2) complex forms which resolves the HJ.

The protein localises to the cytoplasm. It carries out the reaction ATP + H2O = ADP + phosphate + H(+). Its function is as follows. The RuvA-RuvB-RuvC complex processes Holliday junction (HJ) DNA during genetic recombination and DNA repair, while the RuvA-RuvB complex plays an important role in the rescue of blocked DNA replication forks via replication fork reversal (RFR). RuvA specifically binds to HJ cruciform DNA, conferring on it an open structure. The RuvB hexamer acts as an ATP-dependent pump, pulling dsDNA into and through the RuvAB complex. RuvB forms 2 homohexamers on either side of HJ DNA bound by 1 or 2 RuvA tetramers; 4 subunits per hexamer contact DNA at a time. Coordinated motions by a converter formed by DNA-disengaged RuvB subunits stimulates ATP hydrolysis and nucleotide exchange. Immobilization of the converter enables RuvB to convert the ATP-contained energy into a lever motion, pulling 2 nucleotides of DNA out of the RuvA tetramer per ATP hydrolyzed, thus driving DNA branch migration. The RuvB motors rotate together with the DNA substrate, which together with the progressing nucleotide cycle form the mechanistic basis for DNA recombination by continuous HJ branch migration. Branch migration allows RuvC to scan DNA until it finds its consensus sequence, where it cleaves and resolves cruciform DNA. The chain is Holliday junction branch migration complex subunit RuvB from Arthrobacter sp. (strain FB24).